Reading from the N-terminus, the 449-residue chain is UNC93-like protein MFSD11 (449 aa).

Residues 8-28 (LFNIIILGVAFMFMFTAFQTC) form a helical membrane-spanning segment. The N-linked (GlcNAc...) asparagine glycan is linked to Asn-40. Helical transmembrane passes span 53–73 (AIIYGVFSASNLITPSVVAIV), 74–94 (GPQLSMFASGLFYSMYIAVFI), 96–116 (PFPWSFYTASVFIGIAAAVLW), 138–158 (IFWALLQSSLFFGNLYIYFAW), and 170–190 (RTVFIALTVISLVGTVLFFLI). Ser-204 carries the post-translational modification Phosphoserine. 6 consecutive transmembrane segments (helical) span residues 239–259 (MLLLSITTAYTGLELTFFSGV), 277–297 (LIGLSGIFIGIGEILGGSLFG), 309–329 (PVVLLGILVHFIAFYLIFLNM), 359–379 (FLLGLGDSCFNTQLLSILGFL), 385–405 (APAFAIFKFVQSICAAVAFFY), and 410–430 (LLHWQLLVMVIFGFFGTISFF).

It belongs to the unc-93 family.

It localises to the membrane. The sequence is that of UNC93-like protein MFSD11 (MFSD11) from Homo sapiens (Human).